The following is a 232-amino-acid chain: Noggin (232 aa).

An N-terminal signal peptide occupies residues 1–27 (MERCPSLGVTLYALVVVLGLRAAPAGG). Asn-62 carries N-linked (GlcNAc...) asparagine glycosylation. Positions 77-99 (GFMATSPPEDRPGGGGGPAGGAE) are disordered. Disulfide bonds link Cys-155/Cys-192, Cys-178/Cys-228, Cys-184/Cys-230, and Cys-207/Cys-215.

This sequence belongs to the noggin family. In terms of assembly, homodimer. Interacts with GDF5; inhibits chondrocyte differentiation. As to expression, expressed in condensing cartilage and immature chondrocytes.

It is found in the secreted. Essential for cartilage morphogenesis and joint formation. Inhibitor of bone morphogenetic proteins (BMP) signaling which is required for growth and patterning of the neural tube and somite. Inhibits chondrocyte differentiation through its interaction with GDF5 and, probably, GDF6. This Mus musculus (Mouse) protein is Noggin (Nog).